Reading from the N-terminus, the 280-residue chain is uncharacterized protein (280 aa).

The protein belongs to the metallo-dependent hydrolases superfamily.

This is an uncharacterized protein from Methanocaldococcus jannaschii (strain ATCC 43067 / DSM 2661 / JAL-1 / JCM 10045 / NBRC 100440) (Methanococcus jannaschii).